We begin with the raw amino-acid sequence, 415 residues long: Levansucrase LscA (415 aa).

Residues Trp45, Asp46, Ala132, Arg202, and Asp203 each coordinate sucrose. The active-site Nucleophile is the Asp46. The active-site Proton donor/acceptor is Glu287.

It belongs to the glycosyl hydrolase 68 family.

The protein resides in the periplasm. The catalysed reaction is [6)-beta-D-fructofuranosyl-(2-&gt;](n) alpha-D-glucopyranoside + sucrose = [6)-beta-D-fructofuranosyl-(2-&gt;](n+1) alpha-D-glucopyranoside + D-glucose. Functionally, catalyzes the synthesis of levan, a fructose polymer, by transferring the fructosyl moiety from sucrose to a growing acceptor molecule. LscA encodes a functional enzyme in vitro, when expressed in E.coli under control of the vector-based lactose promoter (Plac), and it can restore levan production to the lscB-lscC double mutant. However, lscA is not expressed in P.savastanoi pv. glycinea PG4180 under standard conditions. It could be an ancestral Lsc variant in P.syringae. The protein is Levansucrase LscA of Pseudomonas savastanoi pv. glycinea (Pseudomonas syringae pv. glycinea).